The following is a 490-amino-acid chain: Glycogen synthase kinase-3 alpha (490 aa).

The segment covering Met-1–Gly-15 has biased composition (gly residues). Residues Met-1–Ser-97 form a disordered region. Ser-2 carries the N-acetylserine modification. Ser-2 carries the phosphoserine modification. Phosphoserine; by PKB/AKT1 is present on Ser-21. Residues Pro-25 to Ala-82 show a composition bias toward gly residues. Residues Ser-72, Ser-77, and Ser-97 each carry the phosphoserine modification. The Protein kinase domain maps to Tyr-119–Phe-404. ATP contacts are provided by residues Ile-125 to Val-133 and Lys-148. Catalysis depends on Asp-244, which acts as the Proton acceptor. Tyr-279 carries the post-translational modification Phosphotyrosine. The interval Gly-451–Ser-490 is disordered. Residues Pro-455 to Asp-480 show a composition bias toward polar residues. The segment covering Ala-481–Ser-490 has biased composition (low complexity).

The protein belongs to the protein kinase superfamily. CMGC Ser/Thr protein kinase family. GSK-3 subfamily. Monomer. Interacts with AXIN1 and CTNNB1/beta-catenin. Interacts with ARRB2. Interacts with CTNND2. Interacts with LMBR1L. Interacts with DDX3X. Interacts with TNFRSF10B. In terms of processing, phosphorylated by AKT1 at Ser-21: upon insulin-mediated signaling, the activated PKB/AKT1 protein kinase phosphorylates and deactivates GSK3A, resulting in the dephosphorylation and activation of GYS1. Activated by phosphorylation at Tyr-279.

The enzyme catalyses L-seryl-[tau protein] + ATP = O-phospho-L-seryl-[tau protein] + ADP + H(+). It carries out the reaction L-threonyl-[tau protein] + ATP = O-phospho-L-threonyl-[tau protein] + ADP + H(+). The catalysed reaction is L-seryl-[protein] + ATP = O-phospho-L-seryl-[protein] + ADP + H(+). It catalyses the reaction L-threonyl-[protein] + ATP = O-phospho-L-threonyl-[protein] + ADP + H(+). With respect to regulation, activated by phosphorylation at Tyr-279. In response to insulin, inhibited by phosphorylation at Ser-21 by PKB/AKT1; phosphorylation at this site causes a conformational change, preventing access of substrates to the active site. Inhibited by lithium. Functionally, constitutively active protein kinase that acts as a negative regulator in the hormonal control of glucose homeostasis, Wnt signaling and regulation of transcription factors and microtubules, by phosphorylating and inactivating glycogen synthase (GYS1 or GYS2), CTNNB1/beta-catenin, APC and AXIN1. Requires primed phosphorylation of the majority of its substrates. Contributes to insulin regulation of glycogen synthesis by phosphorylating and inhibiting GYS1 activity and hence glycogen synthesis. Regulates glycogen metabolism in liver, but not in muscle. May also mediate the development of insulin resistance by regulating activation of transcription factors. In Wnt signaling, regulates the level and transcriptional activity of nuclear CTNNB1/beta-catenin. Facilitates amyloid precursor protein (APP) processing and the generation of APP-derived amyloid plaques found in Alzheimer disease. May be involved in the regulation of replication in pancreatic beta-cells. Is necessary for the establishment of neuronal polarity and axon outgrowth. Through phosphorylation of the anti-apoptotic protein MCL1, may control cell apoptosis in response to growth factors deprivation. Acts as a regulator of autophagy by mediating phosphorylation of KAT5/TIP60 under starvation conditions, activating KAT5/TIP60 acetyltransferase activity and promoting acetylation of key autophagy regulators, such as ULK1 and RUBCNL/Pacer. Negatively regulates extrinsic apoptotic signaling pathway via death domain receptors. Promotes the formation of an anti-apoptotic complex, made of DDX3X, BRIC2 and GSK3B, at death receptors, including TNFRSF10B. The anti-apoptotic function is most effective with weak apoptotic signals and can be overcome by stronger stimulation. The polypeptide is Glycogen synthase kinase-3 alpha (Gsk3a) (Mus musculus (Mouse)).